The sequence spans 247 residues: Orotidine 5'-phosphate decarboxylase (247 aa).

Substrate-binding positions include D22, K44, 71-80 (DLKFHDIPNT), T131, R192, Q201, G221, and R222. K73 functions as the Proton donor in the catalytic mechanism.

This sequence belongs to the OMP decarboxylase family. Type 1 subfamily. In terms of assembly, homodimer.

The enzyme catalyses orotidine 5'-phosphate + H(+) = UMP + CO2. The protein operates within pyrimidine metabolism; UMP biosynthesis via de novo pathway; UMP from orotate: step 2/2. Catalyzes the decarboxylation of orotidine 5'-monophosphate (OMP) to uridine 5'-monophosphate (UMP). In Pectobacterium carotovorum subsp. carotovorum (strain PC1), this protein is Orotidine 5'-phosphate decarboxylase.